We begin with the raw amino-acid sequence, 196 residues long: Oplophorus-luciferin 2-monooxygenase catalytic subunit (196 aa).

An N-terminal signal peptide occupies residues 1-27 (MAYSTLFIIALTAVVTQASSTQKSNLT).

Heterotetramer of a catalytic 19 kDa and a non-catalytic 35 kDa subunit.

The protein resides in the secreted. The catalysed reaction is coelenterazine + O2 = coelenteramide + hnu + CO2. With respect to regulation, inhibited by micromolar Cu(2+). In terms of biological role, catalytic subunit of oplophorus-luciferin 2-monooxygenase. Oxidoreductase that converts coelenterazine (the oplophorus luciferin) to coelenteramide under emission of blue light with a maximum at 454 nm. Is also active with bisdeoxycoelenterazine. The protein is Oplophorus-luciferin 2-monooxygenase catalytic subunit of Oplophorus gracilirostris (Luminous shrimp).